Consider the following 333-residue polypeptide: Ribosomal RNA small subunit methyltransferase C (333 aa).

The protein belongs to the methyltransferase superfamily. RsmC family. In terms of assembly, monomer.

The protein resides in the cytoplasm. It catalyses the reaction guanosine(1207) in 16S rRNA + S-adenosyl-L-methionine = N(2)-methylguanosine(1207) in 16S rRNA + S-adenosyl-L-homocysteine + H(+). Its function is as follows. Specifically methylates the guanine in position 1207 of 16S rRNA in the 30S particle. The protein is Ribosomal RNA small subunit methyltransferase C of Actinobacillus succinogenes (strain ATCC 55618 / DSM 22257 / CCUG 43843 / 130Z).